Reading from the N-terminus, the 470-residue chain is O-acyltransferase pboC (470 aa).

Catalysis depends on proton acceptor residues His149 and Asp386.

It belongs to the plant acyltransferase family. In terms of assembly, monomer.

It functions in the pathway secondary metabolite biosynthesis. Its function is as follows. O-acetyltransferase; part of the gene cluster that mediates the biosynthesis of protubonine B, a hydroxylated and diacetylated cyclo-L-Trp-L-Leu derivative. Within the pathway, pboC catalyzes the acetylation of protubonine D at the hydroxy group to produce protubonine C. The first step of the protubonine B synthesis is performed by the nonribosomal peptide synthetase pboA that catalyzes the formation of cyclo-L-Trp-L-Leu by condensing L-Leu with L-Trp. The flavin-dependent monooxygenase pboD is responsible for hydroxylation at C-3 of the indole ring and subsequent formation of the pyrrolidine ring, leadind to protubonine D. Protubonine D is further diacetylated by two acetyltransferases, pboB and pboC, to form the final product protubonine B via protubonine C. The sequence is that of O-acyltransferase pboC from Aspergillus ustus.